The sequence spans 120 residues: Cytochrome b5 (120 aa).

In terms of domain architecture, Cytochrome b5 heme-binding spans proline 2–aspartate 78. 2 residues coordinate heme: histidine 37 and histidine 61. A helical membrane pass occupies residues glycine 98–leucine 118.

The protein belongs to the cytochrome b5 family.

It is found in the endoplasmic reticulum membrane. It localises to the microsome membrane. Membrane bound hemoprotein which function as an electron carrier for several membrane bound oxygenases. It plays a role in fatty-acid desaturation and is also involved in several steps of the sterol biosynthesis pathway, particularly in the 4-demethylation of the 4,4'-dimethyl zymosterol. This chain is Cytochrome b5 (CYB5), found in Saccharomyces cerevisiae (strain ATCC 204508 / S288c) (Baker's yeast).